The primary structure comprises 265 residues: Thiazole synthase (265 aa).

Lys107 serves as the catalytic Schiff-base intermediate with DXP. 1-deoxy-D-xylulose 5-phosphate is bound by residues Gly168, 194–195 (AG), and 216–217 (NT).

Belongs to the ThiG family. As to quaternary structure, homotetramer. Forms heterodimers with either ThiH or ThiS.

The protein localises to the cytoplasm. The enzyme catalyses [ThiS sulfur-carrier protein]-C-terminal-Gly-aminoethanethioate + 2-iminoacetate + 1-deoxy-D-xylulose 5-phosphate = [ThiS sulfur-carrier protein]-C-terminal Gly-Gly + 2-[(2R,5Z)-2-carboxy-4-methylthiazol-5(2H)-ylidene]ethyl phosphate + 2 H2O + H(+). It participates in cofactor biosynthesis; thiamine diphosphate biosynthesis. In terms of biological role, catalyzes the rearrangement of 1-deoxy-D-xylulose 5-phosphate (DXP) to produce the thiazole phosphate moiety of thiamine. Sulfur is provided by the thiocarboxylate moiety of the carrier protein ThiS. In vitro, sulfur can be provided by H(2)S. The polypeptide is Thiazole synthase (Pseudomonas aeruginosa (strain LESB58)).